We begin with the raw amino-acid sequence, 342 residues long: MNTADFDFHLPEELIAQTPLEKRDASKLLIVNRETGEMQDKHFHSIIDMLEPGDALVMNDTRVLPARLYGQKVETGGHVELLLLKNTSGDEWEVLAKPAKRLKVGTRISFGDGRLSAVVTEELTHGGRIVRFEYQGIFLEVLESLGEMPLPPYIHEKLDDRERYQTVYAKESGSAAAPTAGLHFTKELLAEIQAKGVHLVYLTLHVGLGTFRPVSVDNLDEHEMHSEFYQLSEEAAATLRSVKKNGGRVIAVGTTSIRTLETIGSKFDGQIQADSGWTNIFIKPGYEWKVVDAFSTNFHLPKSTLVMLVSAFAGRELVLDAYHHAIQEHYRFFSFGDAMFIY.

This sequence belongs to the QueA family. As to quaternary structure, monomer.

The protein localises to the cytoplasm. It catalyses the reaction 7-aminomethyl-7-carbaguanosine(34) in tRNA + S-adenosyl-L-methionine = epoxyqueuosine(34) in tRNA + adenine + L-methionine + 2 H(+). Its pathway is tRNA modification; tRNA-queuosine biosynthesis. Its function is as follows. Transfers and isomerizes the ribose moiety from AdoMet to the 7-aminomethyl group of 7-deazaguanine (preQ1-tRNA) to give epoxyqueuosine (oQ-tRNA). The sequence is that of S-adenosylmethionine:tRNA ribosyltransferase-isomerase from Streptococcus pneumoniae (strain Hungary19A-6).